The following is a 164-amino-acid chain: Large ribosomal subunit protein eL21x/eL21w (164 aa).

This sequence belongs to the eukaryotic ribosomal protein eL21 family.

The chain is Large ribosomal subunit protein eL21x/eL21w (RPL21E) from Arabidopsis thaliana (Mouse-ear cress).